A 201-amino-acid chain; its full sequence is Peptide deformylase (201 aa).

2 residues coordinate Fe cation: Cys-121 and His-163. Residue Glu-164 is part of the active site. His-167 contributes to the Fe cation binding site.

Belongs to the polypeptide deformylase family. Fe(2+) is required as a cofactor.

It catalyses the reaction N-terminal N-formyl-L-methionyl-[peptide] + H2O = N-terminal L-methionyl-[peptide] + formate. Functionally, removes the formyl group from the N-terminal Met of newly synthesized proteins. Requires at least a dipeptide for an efficient rate of reaction. N-terminal L-methionine is a prerequisite for activity but the enzyme has broad specificity at other positions. This is Peptide deformylase from Synechococcus sp. (strain CC9605).